We begin with the raw amino-acid sequence, 589 residues long: Protein NRT1/ PTR FAMILY 7.2 (589 aa).

A run of 2 helical transmembrane segments spans residues Trp-32–Val-52 and Trp-78–Gly-98. Thr-102 is subject to Phosphothreonine. 10 consecutive transmembrane segments (helical) span residues Ile-105–Leu-125, Val-147–Ile-167, Ile-187–Val-207, Trp-217–Ile-237, Ile-343–Val-363, Ile-377–Tyr-397, Met-423–His-443, Ile-464–Gly-484, Leu-504–Met-524, and Phe-548–Lys-568.

Belongs to the major facilitator superfamily. Proton-dependent oligopeptide transporter (POT/PTR) (TC 2.A.17) family. In terms of tissue distribution, expressed in xylem parenchyma cells within the vasculature. Expressed in siliques and flowers. Higher expression in shoots than in roots.

The protein localises to the cell membrane. Its function is as follows. Low-affinity nitrate transporter. Involved in nitrate removal from xylem sap. Not involved in oligopeptides transport. This chain is Protein NRT1/ PTR FAMILY 7.2 (NPF7.2), found in Arabidopsis thaliana (Mouse-ear cress).